The sequence spans 497 residues: CRISPR-associated endodeoxyribonuclease Cas12f1 (497 aa).

The segment at 29-122 is recognition domain (REC); that stretch reads RKDLSTMSRF…PTYKITTAPI (94 aa). The interval 123–214 is wedge domain (WED); the sequence is RLQNNIYKLI…YCIIPYTFPT (92 aa). Residues 215 to 223 are linker; that stretch reads HETVLDPDK. The interval 224–374 is ruvC-I; it reads VMGVDLGVAK…VAINPQYTSQ (151 aa). Residues aspartate 228 and glutamate 327 contribute to the active site. The interval 375–432 is target nucleic acid-binding (TNB); sequence RCSMCGYIEKTNRSSQAVFECKQCGYGSRTICINCRHVQVSGDVCEECGGIVKKENVN. Residues cysteine 376, cysteine 379, cysteine 395, and cysteine 398 each coordinate Zn(2+). The tract at residues 433–453 is ruvC-II; the sequence is ADYNAAKNISTPYIDQIIMEK. Aspartate 434 is an active-site residue.

Belongs to the CRISPR-associated endonuclease Cas12f family. As to quaternary structure, an asymmetric homodimer. Guide RNA is probably required for dimerization. Mg(2+) is required as a cofactor. Requires Zn(2+) as cofactor.

Its function is as follows. CRISPR (clustered regularly interspaced short palindromic repeat), is an adaptive immune system that provides protection against mobile genetic elements (viruses, transposable elements and conjugative plasmids). CRISPR clusters contain sequences complementary to antecedent mobile elements and target invading nucleic acids. CRISPR clusters are transcribed and processed into CRISPR RNA (crRNA), which requires a trans-encoded small RNA (tracrRNA), but not this protein. Recognizes a short motif in the CRISPR repeat sequences (the 5' PAM or protospacer adjacent motif, TTC in this organism) to help distinguish self versus nonself, as targets within the CRISPR locus do not have PAMs. Has dsDNA endonuclease activity upon expression in E.coli of this protein, a mini CRISPR array and the probable tracrRNA. Plasmid cleavage is centered around positions 24 base pairs 3' of PAM. The mini system protects E.coli against transformation by foreign plasmids. The sequence is that of CRISPR-associated endodeoxyribonuclease Cas12f1 from Syntrophomonas palmitatica (strain DSM 18709 / JCM 14374 / NBRC 102128 / MPA).